Here is a 471-residue protein sequence, read N- to C-terminus: N(6)-adenine-specific methyltransferase METTL4 (471 aa).

Belongs to the MT-A70-like family.

The protein localises to the nucleus. The enzyme catalyses a 2'-O-methyladenosine in U2 snRNA + S-adenosyl-L-methionine = an N(6)-methyl-2'-O-methyladenosine in U2 snRNA + S-adenosyl-L-homocysteine + H(+). The catalysed reaction is a 2'-deoxyadenosine in DNA + S-adenosyl-L-methionine = an N(6)-methyl-2'-deoxyadenosine in DNA + S-adenosyl-L-homocysteine + H(+). Its function is as follows. N(6)-adenine-specific methyltransferase that can methylate both RNAs and DNA. Acts as a N(6)-adenine-specific RNA methyltransferase by catalyzing formation of N6,2'-O-dimethyladenosine (m6A(m)) on internal positions of U2 small nuclear RNA (snRNA): methylates the 6th position of adenine residues with a pre-deposited 2'-O-methylation. Internal m6A(m) methylation of snRNAs regulates RNA splicing. Also able to act as a N(6)-adenine-specific DNA methyltransferase by mediating methylation of DNA on the 6th position of adenine (N(6)-methyladenosine). The existence of N(6)-methyladenosine (m6A) on DNA is however unclear in mammals, and additional evidences are required to confirm the role of the N(6)-adenine-specific DNA methyltransferase activity of METTL4 in vivo. Acts as a regulator of mitochondrial transcript levels and mitochondrial DNA (mtDNA) copy number by mediating mtDNA N(6)-methylation: m6A on mtDNA reduces transcription by repressing TFAM DNA-binding and bending. N(6)-methyladenosine deposition by METTL4 regulates Polycomb silencing by triggering ubiquitination and degradation of sensor proteins ASXL1 and MPND, leading to inactivation of the PR-DUB complex and subsequent preservation of Polycomb silencing. This chain is N(6)-adenine-specific methyltransferase METTL4, found in Mus musculus (Mouse).